The chain runs to 439 residues: N5-carboxyaminoimidazole ribonucleotide synthase (439 aa).

ATP is bound by residues lysine 113, lysine 160, 197 to 200 (EERV), glutamate 205, and 283 to 284 (NE). The region spanning 117–313 (RRRLAALGAA…QFEQHLRAVL (197 aa)) is the ATP-grasp domain.

It belongs to the PurK/PurT family. In terms of assembly, homodimer.

It carries out the reaction 5-amino-1-(5-phospho-beta-D-ribosyl)imidazole + hydrogencarbonate + ATP = 5-carboxyamino-1-(5-phospho-D-ribosyl)imidazole + ADP + phosphate + 2 H(+). It participates in purine metabolism; IMP biosynthesis via de novo pathway; 5-amino-1-(5-phospho-D-ribosyl)imidazole-4-carboxylate from 5-amino-1-(5-phospho-D-ribosyl)imidazole (N5-CAIR route): step 1/2. Functionally, catalyzes the ATP-dependent conversion of 5-aminoimidazole ribonucleotide (AIR) and HCO(3)(-) to N5-carboxyaminoimidazole ribonucleotide (N5-CAIR). This chain is N5-carboxyaminoimidazole ribonucleotide synthase, found in Mycobacterium leprae (strain TN).